The primary structure comprises 347 residues: Selenide, water dikinase (347 aa).

Sec17 is an active-site residue. Sec17 is a non-standard amino acid (selenocysteine). ATP is bound by residues Lys20 and 48-50 (TAD). Asp51 serves as a coordination point for Mg(2+). ATP contacts are provided by residues Asp68, Asp91, and 139–141 (GHS). Asp91 serves as a coordination point for Mg(2+). Asp227 lines the Mg(2+) pocket.

Belongs to the selenophosphate synthase 1 family. Class I subfamily. Homodimer. It depends on Mg(2+) as a cofactor.

The enzyme catalyses hydrogenselenide + ATP + H2O = selenophosphate + AMP + phosphate + 2 H(+). Functionally, synthesizes selenophosphate from selenide and ATP. In Haemophilus influenzae (strain 86-028NP), this protein is Selenide, water dikinase.